A 223-amino-acid polypeptide reads, in one-letter code: Carnitine transport permease protein OpuCD (223 aa).

Residues 22–202 enclose the ABC transmembrane type-1 domain; sequence FWRHFLMSAY…VMAILADVLL (181 aa). A run of 5 helical transmembrane segments spans residues 27-47, 63-83, 87-107, 148-168, and 182-202; these read LMSA…GVYI, IIQT…MGLG, VVLS…YTGI, ALVI…GGLG, and AIIL…DVLL.

This sequence belongs to the binding-protein-dependent transport system permease family. The complex is composed of two ATP-binding proteins (OpuCA), two transmembrane proteins (OpuCB and OpuCD) and a solute-binding protein (OpuCC).

The protein localises to the cell membrane. In terms of biological role, part of the ABC transporter complex OpuCABCD involved in carnitine uptake. Probably responsible for the translocation of the substrate across the membrane. Involved, with BetL and GbuABC, in osmoprotection and cryoprotection of Listeria. Can also mediate weak glycine betaine transport. This chain is Carnitine transport permease protein OpuCD (opuCD), found in Listeria monocytogenes serotype 1/2a (strain 10403S).